We begin with the raw amino-acid sequence, 455 residues long: ATP-dependent protease ATPase subunit HslU (455 aa).

Residues V23, 65–70 (GVGKTE), D266, E333, and R405 each bind ATP.

This sequence belongs to the ClpX chaperone family. HslU subfamily. In terms of assembly, a double ring-shaped homohexamer of HslV is capped on each side by a ring-shaped HslU homohexamer. The assembly of the HslU/HslV complex is dependent on binding of ATP.

It is found in the cytoplasm. ATPase subunit of a proteasome-like degradation complex; this subunit has chaperone activity. The binding of ATP and its subsequent hydrolysis by HslU are essential for unfolding of protein substrates subsequently hydrolyzed by HslV. HslU recognizes the N-terminal part of its protein substrates and unfolds these before they are guided to HslV for hydrolysis. The protein is ATP-dependent protease ATPase subunit HslU of Xanthomonas axonopodis pv. citri (strain 306).